The following is a 215-amino-acid chain: Pentapeptide repeat protein QnrB4 (215 aa).

2 Pentapeptide repeat domains span residues 25–104 (TFFN…SFMN) and 117–191 (ITNT…RGVD).

The protein belongs to the pentapeptide repeat protein family.

In terms of biological role, probably plays a role in resistance to quinolone antibiotics. Only inhibits ATP-dependent DNA supercoiling by E.coli gyrase at high concentration (30 uM). Protects E.coli gyrase supercoiling activity from inhibition by fluoroquinolones (ciprofloxacin) at 0.1 uM, does not protect M.tuberculosis gyrase activity. The chain is Pentapeptide repeat protein QnrB4 from Escherichia coli.